A 796-amino-acid chain; its full sequence is Striatin-3 (796 aa).

Met1 bears the N-acetylmethionine mark. Residues 1–13 (MDELAGGGGGGQG) are compositionally biased toward gly residues. The disordered stretch occupies residues 1-60 (MDELAGGGGGGQGMAAPPRPQQGPGGNLSLPPGANGAPGGGGPPAAEAAGPPAGPELSRP). Residues 71–79 (YIQHEWARF) are caveolin-binding. The stretch at 77–136 (ARFEMERAHWEVERAELQARIAFLQGERKGQENLKKDLVRRIKMLEYALKQERAKYHKLK) forms a coiled coil. Thr150 carries the phosphothreonine modification. Positions 166–183 (QNSQLTWKQGRQLLRQYL) are calmodulin-binding. Residues Ser202, Ser214, Ser229, Ser257, and Ser334 each carry the phosphoserine modification. 2 disordered regions span residues 252-271 (ENAD…IPEG) and 311-335 (EDGE…DLSP). The segment covering 253-264 (NADDSDEEENDM) has biased composition (acidic residues). WD repeat units lie at residues 477-516 (SHFD…PAKK), 530-569 (AHIG…VDPY), 583-622 (AHTD…PCVC), 678-717 (QSSN…MIHS), 720-759 (AHLD…CVQE), and 766-795 (KLDE…AKVF).

It belongs to the WD repeat striatin family. As to quaternary structure, tetramerizes. Part of the core of STRIPAK complexes composed of PP2A catalytic and scaffolding subunits, the striatins (PP2A regulatory subunits), the striatin-associated proteins MOB4, STRIP1 and STRIP2, PDCD10 and members of the STE20 kinases, such as STK24 and STK26. The STRIPAK complex can be extended by adapter proteins such as SLMAP:SIKE1 or CTTNBP2NL. Interacts with CDC42BPB. As to expression, mainly expressed in the brain and muscles but is also detected at low levels in various tissues such as kidney, spleen and lung.

The protein resides in the cytoplasm. It is found in the membrane. Its function is as follows. Calmodulin-binding scaffolding protein which is the center of the striatin-interacting phosphatase and kinase (STRIPAK) complexes. STRIPAK complexes have critical roles in protein (de)phosphorylation and are regulators of multiple signaling pathways including Hippo, MAPK, nuclear receptor and cytoskeleton remodeling. Different types of STRIPAK complexes are involved in a variety of biological processes such as cell growth, differentiation, apoptosis, metabolism and immune regulation. This is Striatin-3 (Strn3) from Mus musculus (Mouse).